A 167-amino-acid chain; its full sequence is Endoribonuclease YbeY (167 aa).

3 residues coordinate Zn(2+): histidine 131, histidine 135, and histidine 141.

This sequence belongs to the endoribonuclease YbeY family. The cofactor is Zn(2+).

The protein resides in the cytoplasm. Its function is as follows. Single strand-specific metallo-endoribonuclease involved in late-stage 70S ribosome quality control and in maturation of the 3' terminus of the 16S rRNA. This chain is Endoribonuclease YbeY, found in Rickettsia rickettsii (strain Iowa).